Consider the following 506-residue polypeptide: Protein MGF 505-9R (506 aa).

It belongs to the asfivirus MGF 505 family.

Functionally, plays a role in virus cell tropism, and may be required for efficient virus replication in macrophages. The polypeptide is Protein MGF 505-9R (African swine fever virus (isolate Tick/South Africa/Pretoriuskop Pr4/1996) (ASFV)).